The following is a 249-amino-acid chain: 3alpha-hydroxy bile acid-CoA-ester 3-dehydrogenase 2 (249 aa).

NAD(+) is bound by residues 15–18, E38, E42, and N92; that span reads TRGI. S144 is a substrate binding site. Active-site proton donor/acceptor residues include Y157 and K161. NAD(+)-binding positions include K161 and 190 to 192; that span reads VNT.

This sequence belongs to the short-chain dehydrogenases/reductases (SDR) family. As to quaternary structure, homotetramer.

The enzyme catalyses a 3alpha-hydroxy bile acid CoA + NAD(+) = a 3-oxo bile acid CoA + NADH + H(+). The catalysed reaction is choloyl-CoA + NAD(+) = 7alpha,12alpha-dihydroxy-3-oxochol-24-oyl-CoA + NADH + H(+). It carries out the reaction chenodeoxycholoyl-CoA + NAD(+) = 7alpha-hydroxy-3-oxochol-24-oyl-CoA + NADH + H(+). It catalyses the reaction deoxycholoyl-CoA + NAD(+) = 12alpha-hydroxy-3-oxocholan-24-oyl-CoA + NADH + H(+). The enzyme catalyses lithocholoyl-CoA + NAD(+) = 3-oxocholan-24-oyl-CoA + NADH + H(+). The protein operates within lipid metabolism; bile acid biosynthesis. Involved in the multi-step bile acid 7alpha-dehydroxylation pathway that transforms primary bile acids to secondary bile acids in the human gut. Catalyzes the oxidation of C3-hydroxyl group of CoA conjugated bile acids generating a C3-oxo bile acid intermediate. Can use choloyl-CoA, chenodeoxycholoyl-CoA, deoxycholoyl-CoA, and lithocholoyl-CoA as substrates with similar efficiency. Highly prefers NAD over NADP as cosubstrate. Also catalyzes the reverse reactions; in vitro, the preferred direction of reaction depends on the pH. Has very little activity with unconjugated (non-CoA) bile acid substrates. This chain is 3alpha-hydroxy bile acid-CoA-ester 3-dehydrogenase 2 (baiA2), found in Clostridium scindens (strain JCM 10418 / VPI 12708).